The primary structure comprises 127 residues: Large ribosomal subunit protein uL22 (127 aa).

It belongs to the universal ribosomal protein uL22 family. In terms of assembly, part of the 50S ribosomal subunit.

In terms of biological role, this protein binds specifically to 23S rRNA; its binding is stimulated by other ribosomal proteins, e.g. L4, L17, and L20. It is important during the early stages of 50S assembly. It makes multiple contacts with different domains of the 23S rRNA in the assembled 50S subunit and ribosome. Functionally, the globular domain of the protein is located near the polypeptide exit tunnel on the outside of the subunit, while an extended beta-hairpin is found that lines the wall of the exit tunnel in the center of the 70S ribosome. This chain is Large ribosomal subunit protein uL22, found in Methylorubrum populi (strain ATCC BAA-705 / NCIMB 13946 / BJ001) (Methylobacterium populi).